Reading from the N-terminus, the 457-residue chain is Mesentericin Y105 secretion protein MesE (457 aa).

The chain crosses the membrane as a helical span at residues 22 to 42 (TLIIVPIFLLVVFIVLFSLFA).

It belongs to the membrane fusion protein (MFP) (TC 8.A.1) family.

It localises to the membrane. Involved in the secretion of mesentericin Y105. The polypeptide is Mesentericin Y105 secretion protein MesE (mesE) (Leuconostoc mesenteroides).